A 234-amino-acid chain; its full sequence is Enolase-phosphatase E1 (234 aa).

Mg(2+) contacts are provided by Asp-13 and Glu-15. Residues 127-128 and Lys-164 each bind substrate; that span reads SS. Residue Asp-191 participates in Mg(2+) binding.

This sequence belongs to the HAD-like hydrolase superfamily. MasA/MtnC family. In terms of assembly, monomer. It depends on Mg(2+) as a cofactor.

Its subcellular location is the cytoplasm. The protein resides in the nucleus. The enzyme catalyses 5-methylsulfanyl-2,3-dioxopentyl phosphate + H2O = 1,2-dihydroxy-5-(methylsulfanyl)pent-1-en-3-one + phosphate. It functions in the pathway amino-acid biosynthesis; L-methionine biosynthesis via salvage pathway; L-methionine from S-methyl-5-thio-alpha-D-ribose 1-phosphate: step 3/6. The protein operates within amino-acid biosynthesis; L-methionine biosynthesis via salvage pathway; L-methionine from S-methyl-5-thio-alpha-D-ribose 1-phosphate: step 4/6. Its function is as follows. Bifunctional enzyme that catalyzes the enolization of 2,3-diketo-5-methylthiopentyl-1-phosphate (DK-MTP-1-P) into the intermediate 2-hydroxy-3-keto-5-methylthiopentenyl-1-phosphate (HK-MTPenyl-1-P), which is then dephosphorylated to form the acireductone 1,2-dihydroxy-3-keto-5-methylthiopentene (DHK-MTPene). This Podospora anserina (strain S / ATCC MYA-4624 / DSM 980 / FGSC 10383) (Pleurage anserina) protein is Enolase-phosphatase E1.